The following is a 216-amino-acid chain: Large ribosomal subunit protein uL3 (216 aa).

The disordered stretch occupies residues 137-157; that stretch reads GASHGAHKNHRKPGSIGGAST.

This sequence belongs to the universal ribosomal protein uL3 family. As to quaternary structure, part of the 50S ribosomal subunit. Forms a cluster with proteins L14 and L19.

One of the primary rRNA binding proteins, it binds directly near the 3'-end of the 23S rRNA, where it nucleates assembly of the 50S subunit. This chain is Large ribosomal subunit protein uL3, found in Paenarthrobacter aurescens (strain TC1).